The primary structure comprises 165 residues: P2Y purinoceptor 4 (165 aa).

The chain crosses the membrane as a helical span at residues 1 to 16 (SDTLYVLSLPTLVYYY). Residues 17 to 30 (AARNHWPFGTGFCK) lie on the Extracellular side of the membrane. Residues 31-51 (FVRFLFYWNLYCSVLFLTCIS) traverse the membrane as a helical segment. Residues 52–74 (VHRYMGICHPLRALRWGRPRFAS) are Cytoplasmic-facing. Residues 75–95 (LLCLAVWLVVAGCLVPNLFFV) form a helical membrane-spanning segment. The Extracellular portion of the chain corresponds to 96–124 (TTSPNGTTILCHDTTRPEEFDHYVHFSSA). An N-linked (GlcNAc...) asparagine glycan is attached at Asn-100. The helical transmembrane segment at 125 to 145 (VMVLLFGLPFLVTLVCYGLMA) threads the bilayer. Over 146 to 165 (RRLYRPLPGAGQSSSRLRSL) the chain is Cytoplasmic.

The protein belongs to the G-protein coupled receptor 1 family.

It localises to the cell membrane. Receptor for UTP and UDP coupled to G-proteins that activate a phosphatidylinositol-calcium second messenger system. The polypeptide is P2Y purinoceptor 4 (P2RY4) (Cricetulus griseus (Chinese hamster)).